A 40-amino-acid polypeptide reads, in one-letter code: Large ribosomal subunit protein bL36A (40 aa).

It belongs to the bacterial ribosomal protein bL36 family.

The chain is Large ribosomal subunit protein bL36A from Saccharopolyspora erythraea (strain ATCC 11635 / DSM 40517 / JCM 4748 / NBRC 13426 / NCIMB 8594 / NRRL 2338).